Consider the following 110-residue polypeptide: Nucleotide-binding protein in fmt 3'region (110 aa).

Residue glycine 8–threonine 15 participates in ATP binding. Aspartate 57 to alanine 60 contributes to the GTP binding site.

It belongs to the RapZ-like family.

Its function is as follows. Displays ATPase and GTPase activities. The sequence is that of Nucleotide-binding protein in fmt 3'region from Thermus thermophilus.